We begin with the raw amino-acid sequence, 347 residues long: DNA polymerase III subunit delta (347 aa).

This sequence belongs to the DNA polymerase HolA subunit family. As to quaternary structure, component of the DNA clamp loading complex consisting of tau(3):delta(1):delta'(1). The DNA polymerase III holoenzyme complex contains at least 10 different subunits organized into 3 functionally essential subassemblies: the Pol III core, the beta sliding clamp processivity factor and the clamp-loading complex. The Pol III core (subunits alpha, epsilon and theta) contains the polymerase and the 3'-5' exonuclease proofreading activities. The polymerase is tethered to the template via the dimeric beta sliding clamp processivity factor. The DNA clamp-loading complex assembles the beta sliding clamp onto the primed template and plays a central role in the organization and communication at the replication fork.

The protein localises to the cytoplasm. The protein resides in the nucleoid. It catalyses the reaction DNA(n) + a 2'-deoxyribonucleoside 5'-triphosphate = DNA(n+1) + diphosphate. Part of the beta sliding clamp loading complex, which hydrolyzes ATP to load the beta clamp onto primed DNA to form the DNA replication pre-initiation complex. DNA polymerase III is a complex, multichain enzyme responsible for most of the replicative synthesis in bacteria. This DNA polymerase also exhibits 3'-5' exonuclease activity. The delta subunit is the wrench that will open the beta subunit dimer. The DNA clamp loading complex (tau(3),delta,delta') is thought to load beta dimers onto DNA by binding ATP which alters the complex's conformation so it can bind beta sliding clamp dimers and open them at one interface. Primed DNA is recognized, ATP is hydrolyzed releasing the clamp loading complex and closing the beta sliding clamp ring around the primed DNA. This Bacillus subtilis (strain 168) protein is DNA polymerase III subunit delta.